Reading from the N-terminus, the 246-residue chain is Indole-3-glycerol phosphate synthase (246 aa).

It belongs to the TrpC family.

The catalysed reaction is 1-(2-carboxyphenylamino)-1-deoxy-D-ribulose 5-phosphate + H(+) = (1S,2R)-1-C-(indol-3-yl)glycerol 3-phosphate + CO2 + H2O. It functions in the pathway amino-acid biosynthesis; L-tryptophan biosynthesis; L-tryptophan from chorismate: step 4/5. This is Indole-3-glycerol phosphate synthase from Sulfurisphaera tokodaii (strain DSM 16993 / JCM 10545 / NBRC 100140 / 7) (Sulfolobus tokodaii).